We begin with the raw amino-acid sequence, 104 residues long: Protein SMALL AUXIN UP-REGULATED RNA 9 (104 aa).

It belongs to the ARG7 family. Interacts with and inhibits PP2C-D subfamily of type 2C phosphatases such as PP2C67/PP2C-D1. Expressed in etiolated hypocotyls, petioles, leaves and flowers.

It is found in the cell membrane. Provide a mechanistic link between auxin and plasma membrane H(+)-ATPases (PM H(+)-ATPases, e.g. AHA1 and AHA2), and triggers PM H(+)-ATPases activity by promoting phosphorylation of their C-terminal autoinhibitory domain as a result of PP2C-D subfamily of type 2C phosphatases inhibition, thus leading to the acidification of the apoplast and the facilitation of solutes and water uptake to drive cell expansion. Triggers plant growth probably by promoting cell elongation. Regulates branch angles and bending. Probably involved in light intensity mediated root development. The polypeptide is Protein SMALL AUXIN UP-REGULATED RNA 9 (Arabidopsis thaliana (Mouse-ear cress)).